A 77-amino-acid chain; its full sequence is Large ribosomal subunit protein uL29 (77 aa).

Belongs to the universal ribosomal protein uL29 family.

In Methanopyrus kandleri (strain AV19 / DSM 6324 / JCM 9639 / NBRC 100938), this protein is Large ribosomal subunit protein uL29.